The primary structure comprises 334 residues: Cyclin N-terminal domain-containing protein 1 (334 aa).

Positions Asn-29–Asn-180 constitute a Cyclin N-terminal domain.

As to quaternary structure, interacts with PRR19; this interaction promotes crossover formation. Interacts with RFC3 and RFC4; these interactions facilitate crossover formation. Interacts with CDC34; this interaction regulates the cell-cycle progression. As to expression, isoform 2 is expressed in spermatocyte.

Its subcellular location is the nucleus. The protein localises to the cytoplasm. It is found in the chromosome. Its function is as follows. Plays a role in the different steps of crossover formation during meiotic recombination. Participates in the crossover differentiation step of crossover-specific recombination intermediates through its interaction with PRR19. In addition, stimulates crossover formation through the interactions with RFC3 and RFC4 and simultaneously regulates cell-cycle progression through interactions with CDC34 and subsequent ubiquitination of WEE1. May also participates in an active deselection process that destabilizes or removes excess pre-CO intermediates. In Mus musculus (Mouse), this protein is Cyclin N-terminal domain-containing protein 1.